Reading from the N-terminus, the 77-residue chain is uncharacterized protein (77 aa).

Disordered stretches follow at residues 1–34 (MSRA…TKMN) and 56–77 (LDGD…FSGR). Basic and acidic residues predominate over residues 8-20 (DNDKGWAKKKGAD). Residues 25–34 (PRPHKQTKMN) show a composition bias toward basic residues. Residues 56–70 (LDGDIRRGGNKKSER) are compositionally biased toward basic and acidic residues.

This is an uncharacterized protein from Dictyostelium discoideum (Social amoeba).